The following is a 118-amino-acid chain: V-type proton ATPase subunit G 1 (118 aa).

The residue at position 2 (alanine 2) is an N-acetylalanine. The segment at 19 to 42 (AEKVSEARKRKNRRLKQAKEEAQA) is disordered.

This sequence belongs to the V-ATPase G subunit family. In terms of assembly, V-ATPase is a heteromultimeric enzyme made up of two complexes: the ATP-hydrolytic V1 complex and the proton translocation V0 complex. The V1 complex consists of three catalytic AB heterodimers that form a heterohexamer, three peripheral stalks each consisting of EG heterodimers, one central rotor including subunits D and F, and the regulatory subunits C and H. The proton translocation complex V0 consists of the proton transport subunit a, a ring of proteolipid subunits c9c'', rotary subunit d, subunits e and f, and the accessory subunits ATP6AP1/Ac45 and ATP6AP2/PRR. As to expression, brain, heart, kidney and spleen.

It localises to the apical cell membrane. In terms of biological role, subunit of the V1 complex of vacuolar(H+)-ATPase (V-ATPase), a multisubunit enzyme composed of a peripheral complex (V1) that hydrolyzes ATP and a membrane integral complex (V0) that translocates protons. V-ATPase is responsible for acidifying and maintaining the pH of intracellular compartments and in some cell types, is targeted to the plasma membrane, where it is responsible for acidifying the extracellular environment. In aerobic conditions, involved in intracellular iron homeostasis, thus triggering the activity of Fe(2+) prolyl hydroxylase (PHD) enzymes, and leading to HIF1A hydroxylation and subsequent proteasomal degradation. The polypeptide is V-type proton ATPase subunit G 1 (ATP6V1G1) (Bos taurus (Bovine)).